Reading from the N-terminus, the 131-residue chain is Ribonuclease VapC3 (131 aa).

The region spanning 4-121 is the PINc domain; it reads VVDASAIAAL…GKLLTLDRQL (118 aa). Mg(2+) is bound by residues aspartate 6, aspartate 100, and aspartate 118.

It belongs to the PINc/VapC protein family. In terms of assembly, homodimer. Forms a complex with putative antitoxin VapB3, possibly VapB(2)-VapC(2). It depends on Mg(2+) as a cofactor.

Its activity is regulated as follows. Inhibited by EDTA. Toxic component of a type II toxin-antitoxin (TA) system. Has ribonuclease activity. This chain is Ribonuclease VapC3, found in Pyrobaculum aerophilum (strain ATCC 51768 / DSM 7523 / JCM 9630 / CIP 104966 / NBRC 100827 / IM2).